We begin with the raw amino-acid sequence, 1535 residues long: Putative protein TIC 214 C-terminal part (1535 aa).

3 disordered regions span residues 264 to 283, 312 to 333, and 1263 to 1282; these read ENQK…NSND, EQQE…SRKA, and DYKE…KNNK.

Belongs to the TIC214 family. Part of the Tic complex.

The protein localises to the plastid. Its subcellular location is the chloroplast. Involved in protein precursor import into chloroplasts. May be part of an intermediate translocation complex acting as a protein-conducting channel at the inner envelope. This Piper cenocladum (Ant piper) protein is Putative protein TIC 214 C-terminal part.